A 213-amino-acid polypeptide reads, in one-letter code: Orotate phosphoribosyltransferase (213 aa).

Residue K26 participates in 5-phospho-alpha-D-ribose 1-diphosphate binding. 34–35 contacts orotate; it reads FF. Residues 72 to 73, R98, K99, K102, H104, and 123 to 131 each bind 5-phospho-alpha-D-ribose 1-diphosphate; these read YK and DDVISAGTS. Residues S127 and R155 each coordinate orotate.

The protein belongs to the purine/pyrimidine phosphoribosyltransferase family. PyrE subfamily. In terms of assembly, homodimer. The cofactor is Mg(2+).

It carries out the reaction orotidine 5'-phosphate + diphosphate = orotate + 5-phospho-alpha-D-ribose 1-diphosphate. Its pathway is pyrimidine metabolism; UMP biosynthesis via de novo pathway; UMP from orotate: step 1/2. Catalyzes the transfer of a ribosyl phosphate group from 5-phosphoribose 1-diphosphate to orotate, leading to the formation of orotidine monophosphate (OMP). This is Orotate phosphoribosyltransferase from Neisseria meningitidis serogroup C (strain 053442).